The sequence spans 458 residues: tRNA modification GTPase MnmE (458 aa).

Arginine 28, glutamate 85, and lysine 124 together coordinate (6S)-5-formyl-5,6,7,8-tetrahydrofolate. One can recognise a TrmE-type G domain in the interval 220–381 (GMNVVIAGRP…LKEHLKAVMG (162 aa)). A K(+)-binding site is contributed by asparagine 230. Residues 230 to 235 (NAGKSS), 249 to 255 (TDIEGTT), and 274 to 277 (DTAG) contribute to the GTP site. Serine 234 is a Mg(2+) binding site. K(+)-binding residues include threonine 249, isoleucine 251, and threonine 254. Threonine 255 contacts Mg(2+). Lysine 458 contributes to the (6S)-5-formyl-5,6,7,8-tetrahydrofolate binding site.

The protein belongs to the TRAFAC class TrmE-Era-EngA-EngB-Septin-like GTPase superfamily. TrmE GTPase family. In terms of assembly, homodimer. Heterotetramer of two MnmE and two MnmG subunits. K(+) is required as a cofactor.

The protein resides in the cytoplasm. In terms of biological role, exhibits a very high intrinsic GTPase hydrolysis rate. Involved in the addition of a carboxymethylaminomethyl (cmnm) group at the wobble position (U34) of certain tRNAs, forming tRNA-cmnm(5)s(2)U34. The sequence is that of tRNA modification GTPase MnmE from Chromohalobacter salexigens (strain ATCC BAA-138 / DSM 3043 / CIP 106854 / NCIMB 13768 / 1H11).